A 153-amino-acid polypeptide reads, in one-letter code: Arachidonate 5-lipoxygenase-activating protein (153 aa).

At 1-8 the chain is on the lumenal side; that stretch reads MDQETVGN. A helical transmembrane segment spans residues 9–30; the sequence is VVLLAIVTLISVIQNGFFAHKV. Residues 31–52 lie on the Cytoplasmic side of the membrane; that stretch reads EHESKTQNGRSFQRTGTLAFER. Residues 53–77 form a helical membrane-spanning segment; sequence VYTANQNCVDAYPTFLVMLWSAGLL. Residues 78–80 lie on the Lumenal side of the membrane; that stretch reads CSQ. Residues 81 to 102 form a helical membrane-spanning segment; it reads VPAAFAGLMYLFVRQKYFVGYL. The Cytoplasmic portion of the chain corresponds to 103-107; the sequence is GERRQ. An intramembrane segment occupies 108–115; sequence STPGYIFG. Residues 116-128 form a helical membrane-spanning segment; it reads KRIILFLFLMSLA. At 129–153 the chain is on the lumenal side; it reads GIFNYYLILFFGSDFENYIKTITTT.

This sequence belongs to the MAPEG family. In terms of assembly, homotrimer. Interacts with LTC4S and ALOX5.

The protein resides in the nucleus membrane. It localises to the endoplasmic reticulum membrane. Its function is as follows. Required for leukotriene biosynthesis by ALOX5 (5-lipoxygenase). Anchors ALOX5 to the membrane. Binds arachidonic acid, and could play an essential role in the transfer of arachidonic acid to ALOX5. Binds to MK-886, a compound that blocks the biosynthesis of leukotrienes. The chain is Arachidonate 5-lipoxygenase-activating protein (ALOX5AP) from Equus caballus (Horse).